The sequence spans 356 residues: DNA polymerase IV (356 aa).

Residues 6 to 186 form the UmuC domain; the sequence is IVHIDMDAFY…LPVDAFHGIG (181 aa). The Mg(2+) site is built by D10 and D104. E105 is a catalytic residue.

The protein belongs to the DNA polymerase type-Y family. As to quaternary structure, monomer. Mg(2+) is required as a cofactor.

The protein resides in the cytoplasm. It carries out the reaction DNA(n) + a 2'-deoxyribonucleoside 5'-triphosphate = DNA(n+1) + diphosphate. Poorly processive, error-prone DNA polymerase involved in untargeted mutagenesis. Copies undamaged DNA at stalled replication forks, which arise in vivo from mismatched or misaligned primer ends. These misaligned primers can be extended by PolIV. Exhibits no 3'-5' exonuclease (proofreading) activity. May be involved in translesional synthesis, in conjunction with the beta clamp from PolIII. This Gluconobacter oxydans (strain 621H) (Gluconobacter suboxydans) protein is DNA polymerase IV.